Reading from the N-terminus, the 147-residue chain is E3 ubiquitin-protein ligase RNF181 homolog (147 aa).

An RING-type; atypical zinc finger spans residues 70–111; sequence CSVCKEPAEEGQKYRILPCKHEFHEECILLWLKKTNSCPLCR.

Belongs to the RNF181 family.

The catalysed reaction is S-ubiquitinyl-[E2 ubiquitin-conjugating enzyme]-L-cysteine + [acceptor protein]-L-lysine = [E2 ubiquitin-conjugating enzyme]-L-cysteine + N(6)-ubiquitinyl-[acceptor protein]-L-lysine.. Its pathway is protein modification; protein ubiquitination. In terms of biological role, E3 ubiquitin-protein ligase which accepts ubiquitin from an E2 ubiquitin-conjugating enzyme in the form of a thioester and then directly transfers the ubiquitin to targeted substrates. The sequence is that of E3 ubiquitin-protein ligase RNF181 homolog from Drosophila melanogaster (Fruit fly).